The primary structure comprises 93 residues: Small ribosomal subunit protein uS19 (93 aa).

The protein belongs to the universal ribosomal protein uS19 family.

Its function is as follows. Protein S19 forms a complex with S13 that binds strongly to the 16S ribosomal RNA. The protein is Small ribosomal subunit protein uS19 of Alkaliphilus oremlandii (strain OhILAs) (Clostridium oremlandii (strain OhILAs)).